We begin with the raw amino-acid sequence, 213 residues long: N-(5'-phosphoribosyl)anthranilate isomerase (213 aa).

The protein belongs to the TrpF family.

It catalyses the reaction N-(5-phospho-beta-D-ribosyl)anthranilate = 1-(2-carboxyphenylamino)-1-deoxy-D-ribulose 5-phosphate. The protein operates within amino-acid biosynthesis; L-tryptophan biosynthesis; L-tryptophan from chorismate: step 3/5. The chain is N-(5'-phosphoribosyl)anthranilate isomerase from Caulobacter sp. (strain K31).